Here is a 767-residue protein sequence, read N- to C-terminus: MPRQFPKLNISEVDEQVRLLAEKVFAKVLREEDSKDALSLFTVPEDCPIGQKEAKERELQKELAEQKSVETAKRKKSFKMIRSQSLSLQMPPQQDWKGPPAASPAMSPTTPVVTGATSLPTPAPYAMPEFQRVTISGDYCAGITLEDYEQAAKSLAKALMIREKYARLAYHRFPRITSQYLGHPRADTAPPEEGLPDFHPPPLPQEDPYCLDDAPPNLDYLVHMQGGILFVYDNKKMLEHQEPHSLPYPDLETYTVDMSHILALITDGPTKTYCHRRLNFLESKFSLHEMLNEMSEFKELKSNPHRDFYNVRKVDTHIHAAACMNQKHLLRFIKHTYQTEPDRTVAEKRGRKITLRQVFDGLHMDPYDLTVDSLDVHAGRQTFHRFDKFNSKYNPVGASELRDLYLKTENYLGGEYFARMVKEVARELEESKYQYSEPRLSIYGRSPEEWPNLAYWFIQHKVYSPNMRWIIQVPRIYDIFRSKKLLPNFGKMLENIFLPLFKATINPQDHRELHLFLKYVTGFDSVDDESKHSDHMFSDKSPNPDVWTSEQNPPYSYYLYYMYANIMVLNNLRRERGLSTFLFRPHCGEAGSITHLVSAFLTADNISHGLLLKKSPVLQYLYYLAQIPIAMSPLSNNSLFLEYSKNPLREFLHKGLHVSLSTDDPMQFHYTKEALMEEYAIAAQVWKLSTCDLCEIARNSVLQSGLSHQEKQKFLGQNYYKEGPEGNDIRKTNVAQIRMAFRYETLCNELSFLSDAMKSEEITALTN.

Phosphoserine is present on residues Ser85 and Ser107. Disordered regions lie at residues 89–111 (QMPP…PTTP) and 181–205 (LGHP…PLPQ). The Zn(2+) site is built by His317 and His319. Residues His319 and 388–393 (KFNSKY) each bind substrate. His586 serves as a coordination point for Zn(2+). Glu589 provides a ligand contact to substrate. The active-site Proton acceptor is the His608. Residue Asp663 participates in Zn(2+) binding. 664–667 (DPMQ) lines the substrate pocket.

The protein belongs to the metallo-dependent hydrolases superfamily. Adenosine and AMP deaminases family. Homotetramer. Zn(2+) is required as a cofactor.

The enzyme catalyses AMP + H2O + H(+) = IMP + NH4(+). Its pathway is purine metabolism; IMP biosynthesis via salvage pathway; IMP from AMP: step 1/1. Its function is as follows. AMP deaminase plays a critical role in energy metabolism. The chain is AMP deaminase 3 from Homo sapiens (Human).